Consider the following 438-residue polypeptide: Adenylosuccinate synthetase (438 aa).

Residues 13-19 and 41-43 each bind GTP; these read GDEGKGK and GHT. Asp14 (proton acceptor) is an active-site residue. Positions 14 and 41 each coordinate Mg(2+). IMP is bound by residues 14-17, 39-42, Thr130, Arg144, Gln225, Thr240, and Arg310; these read DEGK and NAGH. Catalysis depends on His42, which acts as the Proton donor. 306 to 312 is a binding site for substrate; that stretch reads ATTGRLR. GTP is bound by residues Arg312, 338 to 340, and 421 to 423; these read KLD and STG.

It belongs to the adenylosuccinate synthetase family. Homodimer. It depends on Mg(2+) as a cofactor.

The protein resides in the cytoplasm. The catalysed reaction is IMP + L-aspartate + GTP = N(6)-(1,2-dicarboxyethyl)-AMP + GDP + phosphate + 2 H(+). It participates in purine metabolism; AMP biosynthesis via de novo pathway; AMP from IMP: step 1/2. Plays an important role in the de novo pathway of purine nucleotide biosynthesis. Catalyzes the first committed step in the biosynthesis of AMP from IMP. The polypeptide is Adenylosuccinate synthetase (Vibrio vulnificus (strain YJ016)).